The primary structure comprises 376 residues: 23S rRNA (uracil(747)-C(5))-methyltransferase RlmC (376 aa).

[4Fe-4S] cluster is bound by residues C3, C11, C14, and C88. S-adenosyl-L-methionine contacts are provided by Q213, F242, E263, and N308. C335 serves as the catalytic Nucleophile.

This sequence belongs to the class I-like SAM-binding methyltransferase superfamily. RNA M5U methyltransferase family. RlmC subfamily.

It catalyses the reaction uridine(747) in 23S rRNA + S-adenosyl-L-methionine = 5-methyluridine(747) in 23S rRNA + S-adenosyl-L-homocysteine + H(+). Functionally, catalyzes the formation of 5-methyl-uridine at position 747 (m5U747) in 23S rRNA. In Vibrio vulnificus (strain YJ016), this protein is 23S rRNA (uracil(747)-C(5))-methyltransferase RlmC.